Consider the following 252-residue polypeptide: Methionine aminopeptidase (252 aa).

His-76 serves as a coordination point for substrate. Residues Asp-93, Asp-104, and His-168 each coordinate a divalent metal cation. His-175 contributes to the substrate binding site. 2 residues coordinate a divalent metal cation: Glu-202 and Glu-233.

Belongs to the peptidase M24A family. Methionine aminopeptidase type 1 subfamily. In terms of assembly, monomer. It depends on Co(2+) as a cofactor. The cofactor is Zn(2+). Mn(2+) is required as a cofactor. Requires Fe(2+) as cofactor.

It catalyses the reaction Release of N-terminal amino acids, preferentially methionine, from peptides and arylamides.. In terms of biological role, removes the N-terminal methionine from nascent proteins. The N-terminal methionine is often cleaved when the second residue in the primary sequence is small and uncharged (Met-Ala-, Cys, Gly, Pro, Ser, Thr, or Val). Requires deformylation of the N(alpha)-formylated initiator methionine before it can be hydrolyzed. This Staphylococcus aureus (strain MRSA252) protein is Methionine aminopeptidase.